A 232-amino-acid chain; its full sequence is 5'-methylthioadenosine/S-adenosylhomocysteine nucleosidase (232 aa).

The active-site Proton acceptor is the Glu12. Residues Gly78, Ile152, and 173–174 each bind substrate; that span reads ME. Asp197 serves as the catalytic Proton donor.

This sequence belongs to the PNP/UDP phosphorylase family. MtnN subfamily. In terms of assembly, homodimer.

It catalyses the reaction S-adenosyl-L-homocysteine + H2O = S-(5-deoxy-D-ribos-5-yl)-L-homocysteine + adenine. It carries out the reaction S-methyl-5'-thioadenosine + H2O = 5-(methylsulfanyl)-D-ribose + adenine. The catalysed reaction is 5'-deoxyadenosine + H2O = 5-deoxy-D-ribose + adenine. Its pathway is amino-acid biosynthesis; L-methionine biosynthesis via salvage pathway; S-methyl-5-thio-alpha-D-ribose 1-phosphate from S-methyl-5'-thioadenosine (hydrolase route): step 1/2. In terms of biological role, catalyzes the irreversible cleavage of the glycosidic bond in both 5'-methylthioadenosine (MTA) and S-adenosylhomocysteine (SAH/AdoHcy) to adenine and the corresponding thioribose, 5'-methylthioribose and S-ribosylhomocysteine, respectively. Also cleaves 5'-deoxyadenosine, a toxic by-product of radical S-adenosylmethionine (SAM) enzymes, into 5-deoxyribose and adenine. Thus, is required for in vivo function of the radical SAM enzymes biotin synthase and lipoic acid synthase, that are inhibited by 5'-deoxyadenosine accumulation. The chain is 5'-methylthioadenosine/S-adenosylhomocysteine nucleosidase from Escherichia fergusonii (strain ATCC 35469 / DSM 13698 / CCUG 18766 / IAM 14443 / JCM 21226 / LMG 7866 / NBRC 102419 / NCTC 12128 / CDC 0568-73).